Reading from the N-terminus, the 89-residue chain is Large ribosomal subunit protein bL27 (89 aa).

A disordered region spans residues 1-20 (MAHKKAGGSSRNGRDSAGRR).

The protein belongs to the bacterial ribosomal protein bL27 family.

The sequence is that of Large ribosomal subunit protein bL27 from Zymomonas mobilis subsp. mobilis (strain ATCC 31821 / ZM4 / CP4).